A 214-amino-acid chain; its full sequence is MNELTIAMPKGRIFEEAYQMLLKAGFHLPEEVEMSRKLMIEIPEEKIRFILSKPMDVPVYVEHGVADIGIAGKDVLLEQQREVHELLDLNISNCYIASAGLPNTDMNEIAPRIATKYPNIAMKYYKGIGEQVEIIELNGSIELAPMIGLADRIVDIVSTGRTLKENGLVEYEFISTVSSRLIANPVSYRMKGERIIDLVRRLKKCVNEQKSNHI.

This sequence belongs to the ATP phosphoribosyltransferase family. Short subfamily. In terms of assembly, heteromultimer composed of HisG and HisZ subunits.

Its subcellular location is the cytoplasm. It catalyses the reaction 1-(5-phospho-beta-D-ribosyl)-ATP + diphosphate = 5-phospho-alpha-D-ribose 1-diphosphate + ATP. It functions in the pathway amino-acid biosynthesis; L-histidine biosynthesis; L-histidine from 5-phospho-alpha-D-ribose 1-diphosphate: step 1/9. Its function is as follows. Catalyzes the condensation of ATP and 5-phosphoribose 1-diphosphate to form N'-(5'-phosphoribosyl)-ATP (PR-ATP). Has a crucial role in the pathway because the rate of histidine biosynthesis seems to be controlled primarily by regulation of HisG enzymatic activity. This chain is ATP phosphoribosyltransferase, found in Lysinibacillus sphaericus (strain C3-41).